The chain runs to 130 residues: Small ribosomal subunit protein uS8 (130 aa).

Belongs to the universal ribosomal protein uS8 family. In terms of assembly, part of the 30S ribosomal subunit.

Its function is as follows. One of the primary rRNA binding proteins, it binds directly to 16S rRNA central domain where it helps coordinate assembly of the platform of the 30S subunit. The protein is Small ribosomal subunit protein uS8 of Pyrococcus abyssi (strain GE5 / Orsay).